A 313-amino-acid chain; its full sequence is Ribosomal protein L11 methyltransferase (313 aa).

Residues Thr154, Gly179, Asp201, and Asn242 each contribute to the S-adenosyl-L-methionine site.

The protein belongs to the methyltransferase superfamily. PrmA family.

Its subcellular location is the cytoplasm. It carries out the reaction L-lysyl-[protein] + 3 S-adenosyl-L-methionine = N(6),N(6),N(6)-trimethyl-L-lysyl-[protein] + 3 S-adenosyl-L-homocysteine + 3 H(+). Methylates ribosomal protein L11. The sequence is that of Ribosomal protein L11 methyltransferase from Xanthomonas oryzae pv. oryzae (strain MAFF 311018).